Consider the following 95-residue polypeptide: FMRFamide-like neuropeptides 16 (95 aa).

Positions 1-24 (MSLSGFEFSSIIAVLLLLIQLSSA) are cleaved as a signal peptide. A propeptide spanning residues 25 to 58 (AVLPVDYASQYGVASADEMTALPEEGSLFAERPA) is cleaved from the precursor. Phe-67, Phe-77, and Phe-87 each carry phenylalanine amide. Positions 90-95 (SAPFEQ) are excised as a propeptide.

Belongs to the FARP (FMRFamide related peptide) family.

The protein localises to the secreted. FMRFamides and FMRFamide-like peptides are neuropeptides. AQTFVRF-amide inhibits the activity of dissected pharyngeal myogenic muscle system. This Caenorhabditis briggsae protein is FMRFamide-like neuropeptides 16 (flp-16).